Reading from the N-terminus, the 354-residue chain is Glutaminyl-peptide cyclotransferase (354 aa).

A mitochondrion-targeting transit peptide spans 1–8 (MRLLLRNY). Cysteines 136 and 158 form a disulfide. Aspartate 153 lines the Zn(2+) pocket. Catalysis depends on glutamate 190, which acts as the Proton acceptor. Glutamate 191 serves as a coordination point for Zn(2+). Catalysis depends on aspartate 228, which acts as the Proton acceptor. A Zn(2+)-binding site is contributed by histidine 318.

This sequence belongs to the glutaminyl-peptide cyclotransferase family.

It localises to the secreted. The protein resides in the mitochondrion. The enzyme catalyses N-terminal L-glutaminyl-[peptide] = N-terminal 5-oxo-L-prolyl-[peptide] + NH4(+). With respect to regulation, inhibited by imidazoles (imidazole, benzimidazole, 1-benzylimidazole, 1-methylimidazole, P150/03 and N-omega-acetylhistamine) and cysteamines (cysteamine and N-dimethylcysteamine). Inhibited by PDB50 1(3,4-dimethoxyphenyl)-3-(3-imidazol-1-ylpropyl)thiourea. Acts as a glutaminyl-peptide cyclotransferase. Responsible for the biosynthesis of pyroglutamyl peptides. Might be more efficient in the conversion of tri and tetrapeptides in vitro. Might have a relative preference for substrates containing hydrophobic amino acids in vitro. The polypeptide is Glutaminyl-peptide cyclotransferase (Drosophila melanogaster (Fruit fly)).